Here is a 57-residue protein sequence, read N- to C-terminus: Preprotein translocase subunit SecG (57 aa).

At 1–33 the chain is on the cytoplasmic side; it reads MPSSKKKKENVPVMSMAGLIRYYEEEHEKYKVD. A helical membrane pass occupies residues 34-55; that stretch reads PIYVIIASIVLVAVVVAVTKII. Residues 56–57 lie on the Extracellular side of the membrane; that stretch reads PP.

The protein belongs to the SEC61-beta family. Component of the protein translocase complex. Heterotrimer consisting of alpha (SecY), beta (SecG) and gamma (SecE) subunits. Can form oligomers of the heterotrimer.

The protein localises to the cell membrane. Functionally, involved in protein export. The function of the beta subunit is unknown, but it may be involved in stabilization of the trimeric complex. The chain is Preprotein translocase subunit SecG from Metallosphaera sedula (strain ATCC 51363 / DSM 5348 / JCM 9185 / NBRC 15509 / TH2).